The chain runs to 811 residues: Elongation factor G, mitochondrial (811 aa).

Residues 1–64 (MSAIARAAAR…FQQSFQRRWA (64 aa)) constitute a mitochondrion transit peptide. Residues 96–394 (RRQRNVGISA…GVCAYLPNPS (299 aa)) form the tr-type G domain. Residues 105–112 (AHIDSGKT), 192–196 (DTPGH), and 246–249 (NKMD) contribute to the GTP site.

It belongs to the TRAFAC class translation factor GTPase superfamily. Classic translation factor GTPase family. EF-G/EF-2 subfamily.

It localises to the mitochondrion. It participates in protein biosynthesis; polypeptide chain elongation. Functionally, mitochondrial GTPase that catalyzes the GTP-dependent ribosomal translocation step during translation elongation. During this step, the ribosome changes from the pre-translocational (PRE) to the post-translocational (POST) state as the newly formed A-site-bound peptidyl-tRNA and P-site-bound deacylated tRNA move to the P and E sites, respectively. Catalyzes the coordinated movement of the two tRNA molecules, the mRNA and conformational changes in the ribosome. This chain is Elongation factor G, mitochondrial, found in Cryptococcus neoformans var. neoformans serotype D (strain JEC21 / ATCC MYA-565) (Filobasidiella neoformans).